Reading from the N-terminus, the 418-residue chain is MFYSYPYKALSFPIQCVWLKLNGSWPLTESSRPWRSQSLLATAYIVWAWYVIASVGITISYQTAFLLNNLSDIIITTENCCTTFMGVLNFVRLIHLRLNQRKFRQLIENFSYEIWIPNSSKNNVAAECRRRMVTFSIMTSLLACLIIMYCVLPLVEIFFGPAFDAQNKPFPYKMIFPYDAQSSWIRYVMTYIFTSYAGICVVTTLFAEDTILGFFITYTCGQFHLLHQRIAGLFAGSNAELAESIQLERLKRIVEKHNNIISFAKRLEDFFNPILLANLMISSVLICMVGFQIVTGKNMFIGDYVKFIIYISSALSQLYVLCENGDALIKQSTLTAQILYECQWEGSDRIEIQSFTPTTKRIRNQIWFMILCSQQPVRITAFKFSTLSLQSFTAILSTSISYFTLLRSVYFDDEKKLD.

Residues 1-38 lie on the Cytoplasmic side of the membrane; it reads MFYSYPYKALSFPIQCVWLKLNGSWPLTESSRPWRSQS. The helical transmembrane segment at 39 to 59 threads the bilayer; sequence LLATAYIVWAWYVIASVGITI. At 60–70 the chain is on the extracellular side; that stretch reads SYQTAFLLNNL. Residue Asn69 is glycosylated (N-linked (GlcNAc...) asparagine). Residues 71-91 traverse the membrane as a helical segment; the sequence is SDIIITTENCCTTFMGVLNFV. Residues 92 to 140 are Cytoplasmic-facing; the sequence is RLIHLRLNQRKFRQLIENFSYEIWIPNSSKNNVAAECRRRMVTFSIMTS. A helical membrane pass occupies residues 141–161; that stretch reads LLACLIIMYCVLPLVEIFFGP. Residues 162–195 are Extracellular-facing; that stretch reads AFDAQNKPFPYKMIFPYDAQSSWIRYVMTYIFTS. A helical membrane pass occupies residues 196 to 216; the sequence is YAGICVVTTLFAEDTILGFFI. The Cytoplasmic segment spans residues 217 to 273; sequence TYTCGQFHLLHQRIAGLFAGSNAELAESIQLERLKRIVEKHNNIISFAKRLEDFFNP. A helical membrane pass occupies residues 274 to 294; the sequence is ILLANLMISSVLICMVGFQIV. At 295 to 299 the chain is on the extracellular side; that stretch reads TGKNM. A helical transmembrane segment spans residues 300–320; it reads FIGDYVKFIIYISSALSQLYV. The Cytoplasmic portion of the chain corresponds to 321 to 385; it reads LCENGDALIK…PVRITAFKFS (65 aa). The chain crosses the membrane as a helical span at residues 386–406; that stretch reads TLSLQSFTAILSTSISYFTLL. At 407–418 the chain is on the extracellular side; sequence RSVYFDDEKKLD.

Belongs to the insect chemoreceptor superfamily. Heteromeric odorant receptor channel (TC 1.A.69) family. Or1a subfamily. In terms of assembly, interacts with Orco. Complexes exist early in the endomembrane system in olfactory sensory neurons (OSNs), coupling these complexes to the conserved ciliary trafficking pathway. Expressed in olfactory sensory neurons in the antenna.

It localises to the cell membrane. Functionally, odorant receptor which mediates acceptance or avoidance behavior, depending on its substrates. The odorant receptor repertoire encodes a large collection of odor stimuli that vary widely in identity, intensity, and duration. May form a complex with Orco to form odorant-sensing units, providing sensitive and prolonged odorant signaling and calcium permeability. Involved in the behavioral responses to octanol, nonanol, and pentyl acetate. The polypeptide is Odorant receptor 13a (Or13a) (Drosophila melanogaster (Fruit fly)).